The primary structure comprises 78 residues: Large ribosomal subunit protein bL28 (78 aa).

This sequence belongs to the bacterial ribosomal protein bL28 family.

In Prochlorococcus marinus (strain MIT 9215), this protein is Large ribosomal subunit protein bL28.